A 761-amino-acid polypeptide reads, in one-letter code: MAMQEKYPNDRSHATSPGSNVIQKGSSLGTEWQTPVISETFRSRFSRCSSIADSGDTAIGTSCSDIAEDFCSSSGSPSFQPIKSHITIPTAHVMPSTLGASPAKPNSAPSGPSSAKLPLSGLTEGVGMTRNGDFGAVKRSPGLARDFMYLPSAAGENGSQQSWFPAVGHEREGEMRKFDVPSMESTLNQPAMLETLYSDPHYRAHFPNPRPDTNKDVYKVLPESKKAPGSGAVFERNGPHASSSGVLPLGLQPAPGLSKSLSSQVWQPSPDPWHPGEQSCELSTCRQQLELIRLQMEQMQLQNGAMCHHPAAFAPLLPTLEPAQWLSILNSNEHLLKEKELLIDKQRKHISQLEQKVRESELQVHSALLGRPAPFGDVCLLRLQELQRENTFLRAQFAQKTEALSKEKMELEKKLSASEVEIQLIRESLKVTLQKHSEEGKKQEERVKGRDKHINNLKKKCQKESEQNREKQQRIETLERYLADLPTLEDHQKQTEQLKDAELKNTELQERVAELETLLEDTQATCREKEVQLESLRQREADLSSARHSFQDKQSVEEANGENLRVDMESQQKECDSLRKMVERQQLKMEQLHSQVQSQKQELAQEEGINQALREEAQRRETALQQMRTAVKELSVQNQDLIEKNLTLQEHLRQAQPGSSSSPDSAQLACELHQELASCLQDLQAVCSIVTQRAQGHNPNLSLLLGIHSTQHPGTQLDLQKPDVIRRKLEEVQQLRHDIEDLRTSLSDRYAQDMGENCATQ.

Disordered regions lie at residues 1–33 (MAMQEKYPNDRSHATSPGSNVIQKGSSLGTEWQ) and 95–117 (PSTLGASPAKPNSAPSGPSSAKL). Residues 14-33 (ATSPGSNVIQKGSSLGTEWQ) are compositionally biased toward polar residues. The residue at position 16 (S16) is a Phosphoserine. Position 140 is a phosphoserine (S140). Disordered stretches follow at residues 226–279 (KAPG…GEQS) and 435–472 (KHSEEGKKQEERVKGRDKHINNLKKKCQKESEQNREKQ). Residues 256-432 (GLSKSLSSQV…QLIRESLKVT (177 aa)) are mediates interaction with NEK2 and is required for its function in the suppression of centrosome disjunction. 2 coiled-coil regions span residues 333–656 (EHLL…RQAQ) and 723–749 (DVIRRKLEEVQQLRHDIEDLRTSLSDR). Positions 433–475 (LQKHSEEGKKQEERVKGRDKHINNLKKKCQKESEQNREKQQRI) are required for centrosome localization and for its function in the suppression of centrosome disjunction. 2 stretches are compositionally biased toward basic and acidic residues: residues 435 to 454 (KHSEEGKKQEERVKGRDKHI) and 462 to 472 (QKESEQNREKQ).

The protein belongs to the CEP85 family. Homodimer. Interacts with STIL (via N-terminus); this interaction is essential for robust PLK4 activation and efficient centriole assembly and for PLK4-dependent cell migration. Interacts with PLK4; required for CEP85 to be able to drive centriole duplication and cell migration.

The protein localises to the cytoplasm. Its subcellular location is the cytoskeleton. It is found in the microtubule organizing center. It localises to the centrosome. The protein resides in the spindle pole. The protein localises to the nucleus. Its subcellular location is the nucleolus. It is found in the centriole. It localises to the cell cortex. Functionally, acts as a regulator of centriole duplication through a direct interaction with STIL, a key factor involved in the early steps of centriole formation. The CEP85-STIL protein complex acts as a modulator of PLK4-driven cytoskeletal rearrangements and directional cell motility. Acts as a negative regulator of NEK2 to maintain the centrosome integrity in interphase. Suppresses centrosome disjunction by inhibiting NEK2 kinase activity. This Mus musculus (Mouse) protein is Centrosomal protein of 85 kDa (Cep85).